The primary structure comprises 99 residues: Large ribosomal subunit protein uL23cz/uL23cy (99 aa).

Residues 1–37 (MGGVENPVSTDKAIRLPERKQYSSNAEPNPSKTEVKR) are disordered. Residues 12–21 (KAIRLPERKQ) are compositionally biased toward basic and acidic residues. The span at 22 to 32 (YSSNAEPNPSK) shows a compositional bias: polar residues.

It belongs to the universal ribosomal protein uL23 family. In terms of assembly, part of the 50S ribosomal subunit.

It localises to the plastid. The protein localises to the chloroplast. Its function is as follows. Binds to 23S rRNA. The polypeptide is Large ribosomal subunit protein uL23cz/uL23cy (rpl23-A) (Selaginella uncinata (Blue spike-moss)).